A 495-amino-acid polypeptide reads, in one-letter code: Omega-crystallin (495 aa).

This sequence belongs to the aldehyde dehydrogenase family. As to expression, lens.

Functionally, omega-crystallins are structural components of squids and octopi eye lens. Contains relatively little if any DHAL activity. The chain is Omega-crystallin from Nototodarus sloanii (Wellington flying squid).